Reading from the N-terminus, the 581-residue chain is Arginine--tRNA ligase (581 aa).

Residues 126 to 136 (PNLAKEMHVGH) carry the 'HIGH' region motif.

The protein belongs to the class-I aminoacyl-tRNA synthetase family. As to quaternary structure, monomer.

It is found in the cytoplasm. It carries out the reaction tRNA(Arg) + L-arginine + ATP = L-arginyl-tRNA(Arg) + AMP + diphosphate. In Shewanella sediminis (strain HAW-EB3), this protein is Arginine--tRNA ligase.